The sequence spans 733 residues: Catalase-peroxidase (733 aa).

The interval 1-25 (MNEERKCPITGATHKPSAEKGRSNH) is disordered. Residues 16–25 (PSAEKGRSNH) are compositionally biased toward basic and acidic residues. The segment at residues 96–219 (WHSAGTYRTS…LAAVQMGLIY (124 aa)) is a cross-link (tryptophyl-tyrosyl-methioninium (Trp-Tyr) (with M-245)). The active-site Proton acceptor is the His97. Positions 219–245 (YVNPEGPNGKPDPLAAAKDIRETFARM) form a cross-link, tryptophyl-tyrosyl-methioninium (Tyr-Met) (with W-96). His260 lines the heme b pocket.

This sequence belongs to the peroxidase family. Peroxidase/catalase subfamily. Homodimer or homotetramer. It depends on heme b as a cofactor. Formation of the three residue Trp-Tyr-Met cross-link is important for the catalase, but not the peroxidase activity of the enzyme.

It catalyses the reaction H2O2 + AH2 = A + 2 H2O. The enzyme catalyses 2 H2O2 = O2 + 2 H2O. Bifunctional enzyme with both catalase and broad-spectrum peroxidase activity. The protein is Catalase-peroxidase of Chlorobium chlorochromatii (strain CaD3).